A 176-amino-acid chain; its full sequence is Magnetosome protein MamT (176 aa).

Residues 1–11 lie on the Cytoplasmic side of the membrane; sequence MSMEAPRRGRR. The helical transmembrane segment at 12-30 threads the bilayer; that stretch reads WVSLGMIALLAAIGLGLYW. Residues 31–176 lie on the Lumenal side of the membrane; the sequence is DQLSTPSGIT…DKKGGMRWQL (146 aa). The MCR (magnetochrome) 1 motif lies at 89 to 109; sequence VKPGTGMPHPYVGDCIQCHLM. Residues Cys103, Cys106, His107, Cys154, Cys157, and His158 each coordinate heme. The MCR 2 signature appears at 140-160; the sequence is ILPTSRQPHPPAGRCIKCHDI.

The protein belongs to the magnetosome MamT family. Heme is required as a cofactor.

It localises to the magnetosome membrane. Its function is as follows. May play a role in magnetite crystal maturation. May transfer electrons to balance the Fe(2+)-Fe(3+) ratio during magnetite formation. The polypeptide is Magnetosome protein MamT (mamT) (Paramagnetospirillum magneticum (strain ATCC 700264 / AMB-1) (Magnetospirillum magneticum)).